Here is a 660-residue protein sequence, read N- to C-terminus: MAVRELSPARCTSASPLVLARRTKLFALSEMRWAALALGLFSAGLLTQLCGAPQWVRWALFLACYATGGWEPGLAGLQALQRRTLDVDLLMVVAAIGAAAIGQIAEGALLIVIFATSGALEALVTARTADSVRGLMGLAPGTATRVGAGGGEETVNAADLRIGDIVLVRPGERISADATVLAGGSEVDQATVTGEPLPVDKSIGDQVFAGTVNGTGALRIRVDRLARDSVVARIATLVEQASQTKARTQLFIEKVEQRYSIGMVAVTLAVFAVPPLWGETLQRALLRAMTFMIVASPCAVVLATMPPLLAAIANAGRHGVLAKSAIVMEQLGTTTRIAFDKTGTLTRGTPELAGIWVYERRFTDDELLRLAAAAEYPSEHPLGAAIVKAAQSRRIRLPTVGEFTAHPGCRVTARVDGHVIAVGSATALLGTAGAAALEASMITAVDFLQGEGYTVVVVVCDSHPVGLLAITDQLRPEAAAAISAATKLTGAKPVLLTGDNRATADRLGVQVGIDDVRAGLLPDDKVAAVRQLQAGGARLTVVGDGINDAPALAAAHVGIAMGSARSELTLQTADAVVVRDDLTTIPTVIAMSRRARRIVVANLIVAVTFIAGLVVWDLAFTLPLPLGVARHEGSTIIVGLNGLRLLRHTAWRRAAGTAHR.

The next 5 helical transmembrane spans lie at 33–53 (WAAL…CGAP), 60–80 (LFLA…LQAL), 94–114 (AAIG…IVIF), 261–281 (IGMV…GETL), and 292–312 (MIVA…LAAI). The 4-aspartylphosphate intermediate role is filled by D340. Mg(2+) contacts are provided by D544 and D548. The helical transmembrane segment at 598–618 (IVVANLIVAVTFIAGLVVWDL) threads the bilayer.

It belongs to the cation transport ATPase (P-type) (TC 3.A.3) family. Type IB subfamily.

The protein localises to the cell membrane. The enzyme catalyses ATP + H2O = ADP + phosphate + H(+). This chain is Probable cation-transporting P-type ATPase J (ctpJ), found in Mycobacterium tuberculosis (strain CDC 1551 / Oshkosh).